The following is a 549-amino-acid chain: MKNINPTQTSAWQALQNHFDAMKEVTLAELFAKDADRFGKFSATFNDQMLVDYSKNRITEETLSKLLDLAKETDLAGAIKSMFSGEKINRTEDRAVLHVALRNRSNTPILVDGKDVMPEVNAVLEKMKKFSEAIISGEWKGYTGKPITDVVNIGIGGSDLGPFMVTEALRPYKNHLNMHFVSNVDGTHIAEVLKKVNPESTLFLVASKTFTTQETMTNAHSARDWFLKTAGDEKHVAKHFAALSTNAKAVGEFGIDTANMFEFWDWVGGRYSLWSAIGLSIILSVGYDNFVELLSGAHEMDKHFSTTPFEKNLPVLLALIGIWYNNFFGAETEAILPYDQYMHRFAAYFQQGNMESNGKYVDRNGNAVDYQTGPIIWGEPGTNGQHAFYQLIHQGTKLVPCDFIAPAITHNPLSDHHQKLLSNFFAQTEALAFGKSRDVVEQEFRDQGKDPAQLENVVPFKVFEGNRPTNSILLREITPFSLGALIALYEHKIFTQGAILNIFTFDQWGVELGKQLANRILPELGDNKEIASHDSSTNGLINRYKAWRG.

Glu-355 serves as the catalytic Proton donor. Residues His-386 and Lys-514 contribute to the active site.

It belongs to the GPI family.

It is found in the cytoplasm. The enzyme catalyses alpha-D-glucose 6-phosphate = beta-D-fructose 6-phosphate. It participates in carbohydrate biosynthesis; gluconeogenesis. The protein operates within carbohydrate degradation; glycolysis; D-glyceraldehyde 3-phosphate and glycerone phosphate from D-glucose: step 2/4. In terms of biological role, catalyzes the reversible isomerization of glucose-6-phosphate to fructose-6-phosphate. This chain is Glucose-6-phosphate isomerase, found in Cronobacter sakazakii (strain ATCC BAA-894) (Enterobacter sakazakii).